The primary structure comprises 227 residues: Small ribosomal subunit protein uS3 (227 aa).

A KH type-2 domain is found at isoleucine 39–lysine 108.

The protein belongs to the universal ribosomal protein uS3 family. As to quaternary structure, part of the 30S ribosomal subunit. Forms a tight complex with proteins S10 and S14.

Binds the lower part of the 30S subunit head. Binds mRNA in the 70S ribosome, positioning it for translation. In Sulfurihydrogenibium sp. (strain YO3AOP1), this protein is Small ribosomal subunit protein uS3.